The sequence spans 379 residues: Chaperone protein DnaJ (379 aa).

Positions 5–70 (DYYEVLGLSK…EKKAMYDQYG (66 aa)) constitute a J domain. The CR-type zinc finger occupies 136-214 (GCKKDIRIHT…CHGDGRVHKA (79 aa)). Residues Cys-149, Cys-152, Cys-166, Cys-169, Cys-188, Cys-191, Cys-202, and Cys-205 each coordinate Zn(2+). CXXCXGXG motif repeat units lie at residues 149–156 (CDTCHGTG), 166–173 (CSHCHGSG), 188–195 (CPSCHGTG), and 202–209 (CRSCHGDG).

Belongs to the DnaJ family. Homodimer. Zn(2+) serves as cofactor.

It is found in the cytoplasm. In terms of biological role, participates actively in the response to hyperosmotic and heat shock by preventing the aggregation of stress-denatured proteins and by disaggregating proteins, also in an autonomous, DnaK-independent fashion. Unfolded proteins bind initially to DnaJ; upon interaction with the DnaJ-bound protein, DnaK hydrolyzes its bound ATP, resulting in the formation of a stable complex. GrpE releases ADP from DnaK; ATP binding to DnaK triggers the release of the substrate protein, thus completing the reaction cycle. Several rounds of ATP-dependent interactions between DnaJ, DnaK and GrpE are required for fully efficient folding. Also involved, together with DnaK and GrpE, in the DNA replication of plasmids through activation of initiation proteins. The protein is Chaperone protein DnaJ of Mannheimia haemolytica (Pasteurella haemolytica).